Consider the following 136-residue polypeptide: Large-conductance mechanosensitive channel (136 aa).

Transmembrane regions (helical) follow at residues 9–29 (AFAS…GAAF), 32–52 (IVSS…LGGV), 54–74 (FSDL…VVIA), and 79–99 (IQTV…LKAI).

The protein belongs to the MscL family. In terms of assembly, homopentamer.

The protein localises to the cell inner membrane. Channel that opens in response to stretch forces in the membrane lipid bilayer. May participate in the regulation of osmotic pressure changes within the cell. This chain is Large-conductance mechanosensitive channel, found in Shewanella oneidensis (strain ATCC 700550 / JCM 31522 / CIP 106686 / LMG 19005 / NCIMB 14063 / MR-1).